We begin with the raw amino-acid sequence, 486 residues long: MAWIKRKFGERPPPKRLTKEAMRNYLKERGDQTVLILHAKVAQKSYGNEKRFFCPPPCVYLMGSGWKKKKEQMERDGCSEQESQPCAFIGIGNSDQEMQQLNLEGKNYCTAKTLYISDSDKRKHFMLSVKMFYGNSDDIGVFLSKRIKVISKPSKKKQSLKNADLCIASGTKVALFNRLRSQTVSTRYLHVEGGNFHASSQQWGAFFIHLLDDDESEGEEFTVRDGYIHYGQTVKLVCSVTGMALPRLIIRKVDKQTALLDADDPVSQLHKCAFYLKDTERMYLCLSQERIIQFQATPCPKEPNKEMINDGASWTIISTDKAEYTFYEGMGPVLAPVTPVPVVESLQLNGGGDVAMLELTGQNFTPNLRVWFGDVEAETMYRCGESMLCVVPDISAFREGWRWVRQPVQVPVTLVRNDGIIYSTSLTFTYTPEPGPRPHCSAAGAILRANSSQVPPNESNTNSEGSYTNASTNSTSVTSSTATVVS.

DNA-binding stretches follow at residues 43–53 and 151–156; these read QKSYGNEKRFF and SKPSKK. An N6-acetyllysine modification is found at Lys-161. The DNA-binding stretch occupies residues 178–183; the sequence is RLRSQT. In terms of domain architecture, IPT/TIG spans 341–431; sequence PVVESLQLNG…YSTSLTFTYT (91 aa). The span at 451-467 shows a compositional bias: polar residues; sequence SSQVPPNESNTNSEGSY. Residues 451-486 form a disordered region; sequence SSQVPPNESNTNSEGSYTNASTNSTSVTSSTATVVS. The span at 468 to 486 shows a compositional bias: low complexity; that stretch reads TNASTNSTSVTSSTATVVS.

The protein belongs to the Su(H) family. Interacts with activated NOTCH1, NOTCH2 or NOTCH3. Interacts with MINT/SHARP. This interaction may mediate the recruitment of large corepressor complexes containing proteins such as HDAC1, HDAC2, NCOR2, SAP30, FHL1/KYOT2 and CIR1. Interacts with EP300, MAML1 and PTF1A. Interacts with RITA1, leading to nuclear export, prevent the interaction between RBPJ and NICD product and subsequent down-regulation of the Notch signaling pathway. Interacts with SNW1. Interacts with CHCHD2 and CXXC5. Interacts with BEND6 (via BEN domain). Interacts with NKAPL. Interacts with ZMIZ1. Interacts with RBM15. Interacts with L3MBTL3 and KDM1A; the interaction with KDM1A is weaker in the absence of L3MBTL3 and the interaction with L3MBTL3 is impaired by Notch-derived peptides containing the intracellular domain (NICD).

It is found in the nucleus. Its subcellular location is the cytoplasm. Its function is as follows. Transcriptional regulator that plays a central role in Notch signaling, a signaling pathway involved in cell-cell communication that regulates a broad spectrum of cell-fate determinations. Acts as a transcriptional repressor when it is not associated with Notch proteins. When associated with some NICD product of Notch proteins (Notch intracellular domain), it acts as a transcriptional activator that activates transcription of Notch target genes. Probably represses or activates transcription via the recruitment of chromatin remodeling complexes containing histone deacetylase or histone acetylase proteins, respectively. Specifically binds to the immunoglobulin kappa-type J segment recombination signal sequence. Binds specifically to methylated DNA. Binds to the oxygen responsive element of COX4I2 and activates its transcription under hypoxia conditions (4% oxygen). Negatively regulates the phagocyte oxidative burst in response to bacterial infection by repressing transcription of NADPH oxidase subunits. The chain is Recombining binding protein suppressor of hairless (RBPJ) from Pongo abelii (Sumatran orangutan).